A 101-amino-acid chain; its full sequence is NADH-quinone oxidoreductase subunit K (101 aa).

3 helical membrane passes run 4-24, 30-50, and 61-81; these read LAHYLVLGAILFAISIVGIFL, IIILMAIELMLLAVNTNFVAF, and IFVFFVLTVAAAEAAIGLAIL.

It belongs to the complex I subunit 4L family. NDH-1 is composed of 14 different subunits. Subunits NuoA, H, J, K, L, M, N constitute the membrane sector of the complex.

Its subcellular location is the cell inner membrane. The catalysed reaction is a quinone + NADH + 5 H(+)(in) = a quinol + NAD(+) + 4 H(+)(out). In terms of biological role, NDH-1 shuttles electrons from NADH, via FMN and iron-sulfur (Fe-S) centers, to quinones in the respiratory chain. The immediate electron acceptor for the enzyme in this species is believed to be ubiquinone. Couples the redox reaction to proton translocation (for every two electrons transferred, four hydrogen ions are translocated across the cytoplasmic membrane), and thus conserves the redox energy in a proton gradient. This Paraburkholderia xenovorans (strain LB400) protein is NADH-quinone oxidoreductase subunit K.